A 212-amino-acid polypeptide reads, in one-letter code: Probable dual specificity protein phosphatase DDB_G0269404 (212 aa).

The region spanning 30-169 is the Tyrosine-protein phosphatase domain; that stretch reads FDAQEVIPNL…LINYEATILK (140 aa). Cysteine 113 functions as the Phosphocysteine intermediate in the catalytic mechanism.

It belongs to the protein-tyrosine phosphatase family. Non-receptor class dual specificity subfamily.

It carries out the reaction O-phospho-L-tyrosyl-[protein] + H2O = L-tyrosyl-[protein] + phosphate. The catalysed reaction is O-phospho-L-seryl-[protein] + H2O = L-seryl-[protein] + phosphate. The enzyme catalyses O-phospho-L-threonyl-[protein] + H2O = L-threonyl-[protein] + phosphate. Has a dual specificity toward Ser/Thr and Tyr-containing proteins. In Dictyostelium discoideum (Social amoeba), this protein is Probable dual specificity protein phosphatase DDB_G0269404.